Here is a 411-residue protein sequence, read N- to C-terminus: UDP-N-acetylmuramoylalanine--D-glutamate ligase (411 aa).

An ATP-binding site is contributed by 92–98; it reads GTDGKST.

The protein belongs to the MurCDEF family.

It is found in the cytoplasm. It catalyses the reaction UDP-N-acetyl-alpha-D-muramoyl-L-alanine + D-glutamate + ATP = UDP-N-acetyl-alpha-D-muramoyl-L-alanyl-D-glutamate + ADP + phosphate + H(+). The protein operates within cell wall biogenesis; peptidoglycan biosynthesis. Its function is as follows. Cell wall formation. Catalyzes the addition of glutamate to the nucleotide precursor UDP-N-acetylmuramoyl-L-alanine (UMA). The chain is UDP-N-acetylmuramoylalanine--D-glutamate ligase from Hydrogenobaculum sp. (strain Y04AAS1).